A 168-amino-acid chain; its full sequence is Phosphopantetheine adenylyltransferase (168 aa).

Thr14 provides a ligand contact to substrate. ATP contacts are provided by residues 14 to 15 and His22; that span reads TF. The substrate site is built by Lys46, Leu78, and Arg92. ATP is bound by residues 93-95, Glu103, and 128-134; these read GLR and YSFISSS.

It belongs to the bacterial CoaD family. As to quaternary structure, homohexamer. Mg(2+) serves as cofactor.

Its subcellular location is the cytoplasm. It catalyses the reaction (R)-4'-phosphopantetheine + ATP + H(+) = 3'-dephospho-CoA + diphosphate. It functions in the pathway cofactor biosynthesis; coenzyme A biosynthesis; CoA from (R)-pantothenate: step 4/5. Its function is as follows. Reversibly transfers an adenylyl group from ATP to 4'-phosphopantetheine, yielding dephospho-CoA (dPCoA) and pyrophosphate. The protein is Phosphopantetheine adenylyltransferase of Xanthomonas campestris pv. campestris (strain B100).